The sequence spans 563 residues: Mitochondrial distribution and morphology protein 34 (563 aa).

One can recognise an SMP-LTD domain in the interval 1–195 (MAFNFNWSPL…LPAIIHRLSL (195 aa)). Disordered regions lie at residues 298-460 (ERGD…QIPT) and 535-563 (RHDKTAREGFWSTSSNGDDAPPAYEPKAL). Polar residues-rich tracts occupy residues 303–332 (AGTTTPATTSLHRPQSSLGGQSTTYTFSNR) and 346–357 (SLVNMNSATTGL). Residues 365-383 (SRSHTTRKKKNRVVNLRKS) are compositionally biased toward basic residues. Polar residues-rich tracts occupy residues 386 to 402 (TDNVSESGESETASITA) and 444 to 460 (PSRSITPEQGNMNQIPT).

This sequence belongs to the MDM34 family. Component of the ER-mitochondria encounter structure (ERMES) or MDM complex, composed of mmm1, mdm10, mdm12 and mdm34.

It localises to the mitochondrion outer membrane. Its function is as follows. Component of the ERMES/MDM complex, which serves as a molecular tether to connect the endoplasmic reticulum (ER) and mitochondria. Components of this complex are involved in the control of mitochondrial shape and protein biogenesis, and function in nonvesicular lipid trafficking between the ER and mitochondria. Mdm34 is required for the interaction of the ER-resident membrane protein mmm1 and the outer mitochondrial membrane-resident beta-barrel protein mdm10. The sequence is that of Mitochondrial distribution and morphology protein 34 from Sclerotinia sclerotiorum (strain ATCC 18683 / 1980 / Ss-1) (White mold).